Here is a 629-residue protein sequence, read N- to C-terminus: MKVEFDYKSLGLKVGLEIHRQLDTKKLFSAVPSQLHDNVDFTFERRLRPTMSELGEIDQAALEEFKRGRAFVYEGNYKYTDLVYVDEEPPHMPDEEALKVALQITYLLNAIPVDEVHFMRKIVIDGSNVSGFQRTAIVGMNGKVDTPWGSVGIPTICLEEDACRIIEQGERKAIYRLDRLGIPLIEIATTPDIHHPEQAKIVAKFIGDALRATRKVKRGLGTIRQDLNVSIKGGARIEIKGVQELDMIPVIIEREVQRQLNLLKIKEELQKRGVKEEDLKEEFYDVTDIFSGTGSKIIARTLKKGGKILAIKLPKFRGLIGFEIQPGRRLGTEMADRAKKYVKGIFHIDELPNYGISQEEVDKVVERLNLGEFDAFVLVAAEEEIAKKALREILQRAREAISGVPEETRRALPDGNTQYMRPLPGKARMYPETDIPPIFMSEELKKEILENLPEYPQAKVNRYVKEYKIDKSLAQTLVDDERDELFEELIAMGIKPSLAASILVVVLKGLKKEVSTDNITETHIKDAFKLLHENKIAKEALEEIFKELALHPEKTALQVAEEKGLTLLSEGEVEKIIEEIVRENIDVVKEKGMGAMGMLMGRAMAKLRGKADGKLVNQLVRKKIQEFTS.

A disordered region spans residues P405–K426.

It belongs to the GatB/GatE family. GatE subfamily. As to quaternary structure, heterodimer of GatD and GatE.

It catalyses the reaction L-glutamyl-tRNA(Gln) + L-glutamine + ATP + H2O = L-glutaminyl-tRNA(Gln) + L-glutamate + ADP + phosphate + H(+). Its function is as follows. Allows the formation of correctly charged Gln-tRNA(Gln) through the transamidation of misacylated Glu-tRNA(Gln) in organisms which lack glutaminyl-tRNA synthetase. The reaction takes place in the presence of glutamine and ATP through an activated gamma-phospho-Glu-tRNA(Gln). The GatDE system is specific for glutamate and does not act on aspartate. The protein is Glutamyl-tRNA(Gln) amidotransferase subunit E of Thermococcus sibiricus (strain DSM 12597 / MM 739).